Reading from the N-terminus, the 121-residue chain is Basic phospholipase A2 VRV-PL-VIIIa (121 aa).

Cystine bridges form between cysteine 26–cysteine 115, cysteine 28–cysteine 44, cysteine 43–cysteine 95, cysteine 49–cysteine 121, cysteine 50–cysteine 88, cysteine 57–cysteine 81, and cysteine 75–cysteine 86. 3 residues coordinate Ca(2+): tyrosine 27, glycine 29, and glycine 31. Histidine 47 is a catalytic residue. Aspartate 48 contributes to the Ca(2+) binding site. Residue aspartate 89 is part of the active site.

It belongs to the phospholipase A2 family. Group II subfamily. D49 sub-subfamily. As to quaternary structure, monomer. It depends on Ca(2+) as a cofactor. As to expression, expressed by the venom gland.

The protein resides in the secreted. The catalysed reaction is a 1,2-diacyl-sn-glycero-3-phosphocholine + H2O = a 1-acyl-sn-glycero-3-phosphocholine + a fatty acid + H(+). With respect to regulation, oxyphenbutazone (OPB), anisic acid and atropine inhibit the enzymatic activity by binding at the substrate-binding site. P-coumaric acid, resveratrol, spermidine, corticosterone and gramine derivative inhibit the enzymatic activity by binding at the substrate-binding site. Snake venom phospholipase A2 (PLA2) that shows weak neurotoxicity and medium anticoagulant effects by binding to factor Xa (F10) and inhibiting the prothrombinase activity (IC(50) is 130 nM). It also damages vital organs such as lung, liver and kidney, displays edema-inducing activities when injected into the foot pads of mice and induces necrosis of muscle cells when injected into the thigh muscle. Has a low enzymatic activity. PLA2 catalyzes the calcium-dependent hydrolysis of the 2-acyl groups in 3-sn-phosphoglycerides. This Daboia russelii (Russel's viper) protein is Basic phospholipase A2 VRV-PL-VIIIa.